The chain runs to 298 residues: MKVTVISGSSSEVVELPSNAGLTDLKKVYKPRVDIHRKSFKILRSGGDKNDKSAYITLDAKRALTEQGVKDGSEVVYKDLGPQVGYRTVFVVEYAGPLAIMLAYAARPSFIYGSSIVKEYCYTQKLYIALFCAHFIKRELETFFVHKFSHPTMPRRNIIKNCVYYWTFALGIGYALCSPYYTEPASPTLVNASAVAMVIFELLNFAVHVQLSGMRKGDGDATRPVPKGILFSLVSCPNYLFEILSWVAFSLGTSMLTSWGFTFAGLVQMAEWAVKKHKNYIKTDPSVRNKKAMLPFLL.

The next 4 helical transmembrane spans lie at 162–182 (CVYY…PYYT), 189–209 (LVNA…AVHV), 229–249 (ILFS…WVAF), and 254–274 (SMLT…EWAV).

Belongs to the steroid 5-alpha reductase family.

It localises to the membrane. It functions in the pathway lipid metabolism; fatty acid biosynthesis. Functionally, involved in the synthesis of fatty acids. This is Putative enoyl-CoA reductase from Trypanosoma brucei brucei (strain 927/4 GUTat10.1).